The chain runs to 414 residues: uncharacterized protein (414 aa).

The tract at residues 87-117 (KTNDDNKTNGRETHLRPSPSKPEYTGRPTQN) is disordered. Over residues 88–101 (TNDDNKTNGRETHL) the composition is skewed to basic and acidic residues. A coiled-coil region spans residues 243–405 (SMLQSSIDKL…RNKLEMEVER (163 aa)).

This is an uncharacterized protein from Encephalitozoon cuniculi (strain GB-M1) (Microsporidian parasite).